A 384-amino-acid polypeptide reads, in one-letter code: Dehydrogenase ALT3 (384 aa).

The protein belongs to the iron-containing alcohol dehydrogenase family. It depends on Fe cation as a cofactor.

Its pathway is mycotoxin biosynthesis. Its function is as follows. Dehydrogenase; part of the gene cluster that mediates the biosynthesis of the host-selective toxins (HSTs) AAL-toxins, sphinganine-analog mycotoxins responsible for Alternaria stem canker on tomato by the tomato pathotype. The biosynthesis starts with the polyketide synthase ALT1-catalyzed C-16 carbon chain assembly from one starter acetyl-CoA unit with malonyl-CoA extender units. ALT1 also selectively transfers methyl groups at the first and the third cycle of chain elongation for AAL toxin. The C-16 polyketide chain is released from the enzyme by a nucleophilic attack of a carbanion, which is derived from R-carbon of glycin by decarboxylation, on the carbonyl carbon of polyketide acyl chain. This step is probably catalyzed by a pyridoxal 5'-phosphate-dependent aminoacyl transferase ALT4. The respective functions of the other enzymes encoded by the cluster have still to be elucidated. The sphingosine N-acyltransferase-like protein ALT7 seems not to act as a resistance/self-tolerance factor against the toxin in the toxin biosynthetic gene cluster, contrary to what is expected. This is Dehydrogenase ALT3 from Alternaria alternata (Alternaria rot fungus).